Consider the following 202-residue polypeptide: Holliday junction branch migration complex subunit RuvA (202 aa).

Positions 1-64 (MIGRLRGSLA…EDAHLLYGFY (64 aa)) are domain I. The domain II stretch occupies residues 65–143 (EKRERELFRE…AWEALPGTFT (79 aa)). The interval 144–153 (LVSNGPNQAE) is flexible linker. A domain III region spans residues 154 to 202 (PVASAESDAVSALISLGYKPQEASKAVSAIKEKDLSSADLIRRALKGMG).

The protein belongs to the RuvA family. As to quaternary structure, homotetramer. Forms an RuvA(8)-RuvB(12)-Holliday junction (HJ) complex. HJ DNA is sandwiched between 2 RuvA tetramers; dsDNA enters through RuvA and exits via RuvB. An RuvB hexamer assembles on each DNA strand where it exits the tetramer. Each RuvB hexamer is contacted by two RuvA subunits (via domain III) on 2 adjacent RuvB subunits; this complex drives branch migration. In the full resolvosome a probable DNA-RuvA(4)-RuvB(12)-RuvC(2) complex forms which resolves the HJ.

The protein localises to the cytoplasm. The RuvA-RuvB-RuvC complex processes Holliday junction (HJ) DNA during genetic recombination and DNA repair, while the RuvA-RuvB complex plays an important role in the rescue of blocked DNA replication forks via replication fork reversal (RFR). RuvA specifically binds to HJ cruciform DNA, conferring on it an open structure. The RuvB hexamer acts as an ATP-dependent pump, pulling dsDNA into and through the RuvAB complex. HJ branch migration allows RuvC to scan DNA until it finds its consensus sequence, where it cleaves and resolves the cruciform DNA. This is Holliday junction branch migration complex subunit RuvA from Pseudomonas syringae pv. syringae (strain B728a).